The following is a 37-amino-acid chain: Large ribosomal subunit protein bL36B (37 aa).

Belongs to the bacterial ribosomal protein bL36 family.

In Saccharopolyspora erythraea (strain ATCC 11635 / DSM 40517 / JCM 4748 / NBRC 13426 / NCIMB 8594 / NRRL 2338), this protein is Large ribosomal subunit protein bL36B.